The primary structure comprises 640 residues: RecBCD enzyme subunit RecD (640 aa).

194 to 201 lines the ATP pocket; the sequence is GGPGTGKT.

This sequence belongs to the RecD family. As to quaternary structure, heterotrimer of RecB, RecC and RecD. All subunits contribute to DNA-binding.

The catalysed reaction is Couples ATP hydrolysis with the unwinding of duplex DNA at the replication fork by translocating in the 5'-3' direction. This creates two antiparallel DNA single strands (ssDNA). The leading ssDNA polymer is the template for DNA polymerase III holoenzyme which synthesizes a continuous strand.. The enzyme catalyses ATP + H2O = ADP + phosphate + H(+). In terms of biological role, a helicase/nuclease that prepares dsDNA breaks (DSB) for recombinational DNA repair. Binds to DSBs and unwinds DNA via a highly rapid and processive ATP-dependent bidirectional helicase activity. Unwinds dsDNA until it encounters a Chi (crossover hotspot instigator) sequence from the 3' direction. Cuts ssDNA a few nucleotides 3' to the Chi site. The properties and activities of the enzyme are changed at Chi. The Chi-altered holoenzyme produces a long 3'-ssDNA overhang and facilitates RecA-binding to the ssDNA for homologous DNA recombination and repair. Holoenzyme degrades any linearized DNA that is unable to undergo homologous recombination. In the holoenzyme this subunit has ssDNA-dependent ATPase and 5'-3' helicase activity. When added to pre-assembled RecBC greatly stimulates nuclease activity and augments holoenzyme processivity. Negatively regulates the RecA-loading ability of RecBCD. The sequence is that of RecBCD enzyme subunit RecD from Haemophilus influenzae (strain ATCC 51907 / DSM 11121 / KW20 / Rd).